A 156-amino-acid polypeptide reads, in one-letter code: Small ribosomal subunit protein uS7 (156 aa).

Belongs to the universal ribosomal protein uS7 family. Part of the 30S ribosomal subunit. Contacts proteins S9 and S11.

In terms of biological role, one of the primary rRNA binding proteins, it binds directly to 16S rRNA where it nucleates assembly of the head domain of the 30S subunit. Is located at the subunit interface close to the decoding center, probably blocks exit of the E-site tRNA. The protein is Small ribosomal subunit protein uS7 of Nitratiruptor sp. (strain SB155-2).